Consider the following 127-residue polypeptide: Adult-specific rigid cuticular protein 12.6 (127 aa).

The 79-residue stretch at Gly-9–Pro-87 folds into the Chitin-binding type R&amp;R domain.

Component of the rigid cuticle of the spider. In Araneus diadematus (European garden spider), this protein is Adult-specific rigid cuticular protein 12.6.